The primary structure comprises 359 residues: uncharacterized protein (359 aa).

3 disordered regions span residues 90 to 117, 132 to 161, and 235 to 359; these read QESPVRGMSPAPNGAKVPPRPHSEPSRK, IKKEEIKAKRPPSPPKACSTPGSCSSGMTS, and TSME…THRR. A compositionally biased stretch (polar residues) spans 151-161; it reads TPGSCSSGMTS. A compositionally biased stretch (low complexity) spans 245–259; that stretch reads KPPTVKSPPTVKLPP. Basic and acidic residues predominate over residues 286 to 299; it reads EENKEVPKEAEHKP.

This is an uncharacterized protein from Homo sapiens (Human).